Consider the following 118-residue polypeptide: MARIAGVNIPDNKHTVISLTYIYGVGRTTAQKICADAGVNPAAKIKDLSDEQIETLRGEVAKFTTEGDLRRDINMKIKRLMDLGCYRGLRHRKGLPVRGQRTKTNARTRKGPRKPIRK.

Positions 92-118 are disordered; the sequence is RKGLPVRGQRTKTNARTRKGPRKPIRK.

This sequence belongs to the universal ribosomal protein uS13 family. Part of the 30S ribosomal subunit. Forms a loose heterodimer with protein S19. Forms two bridges to the 50S subunit in the 70S ribosome.

In terms of biological role, located at the top of the head of the 30S subunit, it contacts several helices of the 16S rRNA. In the 70S ribosome it contacts the 23S rRNA (bridge B1a) and protein L5 of the 50S subunit (bridge B1b), connecting the 2 subunits; these bridges are implicated in subunit movement. Contacts the tRNAs in the A and P-sites. This chain is Small ribosomal subunit protein uS13, found in Pseudomonas putida (strain ATCC 700007 / DSM 6899 / JCM 31910 / BCRC 17059 / LMG 24140 / F1).